The sequence spans 425 residues: UDP-N-acetylglucosamine 1-carboxyvinyltransferase (425 aa).

Lys22–Asn23 serves as a coordination point for phosphoenolpyruvate. Position 91 (Arg91) interacts with UDP-N-acetyl-alpha-D-glucosamine. Cys115 functions as the Proton donor in the catalytic mechanism. At Cys115 the chain carries 2-(S-cysteinyl)pyruvic acid O-phosphothioketal. UDP-N-acetyl-alpha-D-glucosamine contacts are provided by residues Arg120–Leu124, Asp305, and Val327.

Belongs to the EPSP synthase family. MurA subfamily.

The protein resides in the cytoplasm. The catalysed reaction is phosphoenolpyruvate + UDP-N-acetyl-alpha-D-glucosamine = UDP-N-acetyl-3-O-(1-carboxyvinyl)-alpha-D-glucosamine + phosphate. It participates in cell wall biogenesis; peptidoglycan biosynthesis. Functionally, cell wall formation. Adds enolpyruvyl to UDP-N-acetylglucosamine. The polypeptide is UDP-N-acetylglucosamine 1-carboxyvinyltransferase (Coprothermobacter proteolyticus (strain ATCC 35245 / DSM 5265 / OCM 4 / BT)).